A 397-amino-acid chain; its full sequence is MNYAYPDEKGHYGIYGGRYVPETLMQSVLELEEAYKEAMQDEAFQKELNHYLKTYIGRETPLYYAENMTKYCGGAKIYLKREDLNHTGAHKINNTIGQALLAVRMGKKKVVAETGAGQHGVATATVCALLGLECVIFMGEEDVRRQKLNVFRMELLGAKVESVAAGSGTLKDAVNEALRYWVSHVHDTHYIMGSVLGPHPFPQIVRDFQSVIGNETKKQYEALEGKLPEAVVACIGGGSNAMGMFYPFVHDEEVALYGVEAAGKGVHTEKHAATLTKGSVGVLHGSMMYLLQNEEGQIQEAHSISAGLDYPGVGPEHSLLKDIGRVSYHSITDEEALEAFQLLTKKEGIIPALESSHAVAYALKLAPQMKKDEGLVICLSGRGDKDVESIKRYMEEV.

Residue Lys91 is modified to N6-(pyridoxal phosphate)lysine.

This sequence belongs to the TrpB family. In terms of assembly, tetramer of two alpha and two beta chains. Pyridoxal 5'-phosphate is required as a cofactor.

The enzyme catalyses (1S,2R)-1-C-(indol-3-yl)glycerol 3-phosphate + L-serine = D-glyceraldehyde 3-phosphate + L-tryptophan + H2O. It participates in amino-acid biosynthesis; L-tryptophan biosynthesis; L-tryptophan from chorismate: step 5/5. Functionally, the beta subunit is responsible for the synthesis of L-tryptophan from indole and L-serine. The chain is Tryptophan synthase beta chain from Bacillus cereus (strain ATCC 14579 / DSM 31 / CCUG 7414 / JCM 2152 / NBRC 15305 / NCIMB 9373 / NCTC 2599 / NRRL B-3711).